A 376-amino-acid chain; its full sequence is Ribonucleoside-diphosphate reductase subunit beta (376 aa).

Aspartate 85, glutamate 116, and histidine 119 together coordinate Fe cation. The active site involves tyrosine 123. Glutamate 205, glutamate 239, and histidine 242 together coordinate Fe cation.

Belongs to the ribonucleoside diphosphate reductase small chain family. As to quaternary structure, tetramer of two alpha and two beta subunits. The cofactor is Fe cation.

The enzyme catalyses a 2'-deoxyribonucleoside 5'-diphosphate + [thioredoxin]-disulfide + H2O = a ribonucleoside 5'-diphosphate + [thioredoxin]-dithiol. Its function is as follows. Provides the precursors necessary for DNA synthesis. Catalyzes the biosynthesis of deoxyribonucleotides from the corresponding ribonucleotides. This Buchnera aphidicola subsp. Schizaphis graminum (strain Sg) protein is Ribonucleoside-diphosphate reductase subunit beta (nrdB).